The following is a 480-amino-acid chain: UDP-N-acetylmuramate--L-alanine ligase (480 aa).

125-131 provides a ligand contact to ATP; it reads GTHGKTT.

This sequence belongs to the MurCDEF family.

Its subcellular location is the cytoplasm. The catalysed reaction is UDP-N-acetyl-alpha-D-muramate + L-alanine + ATP = UDP-N-acetyl-alpha-D-muramoyl-L-alanine + ADP + phosphate + H(+). Its pathway is cell wall biogenesis; peptidoglycan biosynthesis. In terms of biological role, cell wall formation. The sequence is that of UDP-N-acetylmuramate--L-alanine ligase from Ectopseudomonas mendocina (strain ymp) (Pseudomonas mendocina).